The sequence spans 209 residues: Ribosomal RNA large subunit methyltransferase E (209 aa).

S-adenosyl-L-methionine-binding residues include G63, W65, D83, D99, and D124. K164 functions as the Proton acceptor in the catalytic mechanism. The TRAM domain maps to 191–209 (EASRGRSREVYIVATGYKG).

It belongs to the class I-like SAM-binding methyltransferase superfamily. RNA methyltransferase RlmE family.

Its subcellular location is the cytoplasm. It carries out the reaction uridine(2552) in 23S rRNA + S-adenosyl-L-methionine = 2'-O-methyluridine(2552) in 23S rRNA + S-adenosyl-L-homocysteine + H(+). Its function is as follows. Specifically methylates the uridine in position 2552 of 23S rRNA at the 2'-O position of the ribose in the fully assembled 50S ribosomal subunit. This is Ribosomal RNA large subunit methyltransferase E from Haemophilus influenzae (strain 86-028NP).